The following is a 326-amino-acid chain: MADGGGGGEAGSGGSAPVCSFVRKPPKNIRKRPTAPAGSDDDDEDGSGAIAAARAKKAPSSTSKLFFSSADGSSEPRRFQYESSRTIQASTDSRATATLETETEFDRDARAIRERQLKQAEESLKKNPSAPASSSGSGSGEVYKGIHGYTDYKAGFRREHTVSSEKAGGSHGPLRASAHIRLSARFDYQPDICKDYKETGYCGYGDSCKFMHDRGDYKSGWQIEKEWEEAEKARKRRIAMGGDGSDYEAGEEDDDDDEEALPFACYICREPFVDPVVTKCKHYFCEHCALKHHSKNKKCFVCNKPTLGIFNAAQEIRKKMAQDKKQ.

Positions 1-14 are enriched in gly residues; sequence MADGGGGGEAGSGG. The segment at 1–142 is disordered; it reads MADGGGGGEA…SSSGSGSGEV (142 aa). Residues 24-33 show a composition bias toward basic residues; it reads KPPKNIRKRP. A compositionally biased stretch (low complexity) spans 47–64; the sequence is SGAIAAARAKKAPSSTSK. A compositionally biased stretch (polar residues) spans 81-100; sequence YESSRTIQASTDSRATATLE. The span at 104–125 shows a compositional bias: basic and acidic residues; sequence EFDRDARAIRERQLKQAEESLK. The segment at 187 to 215 adopts a C3H1-type zinc-finger fold; the sequence is DYQPDICKDYKETGYCGYGDSCKFMHDRG. An RING-type zinc finger spans residues 265–303; it reads CYICREPFVDPVVTKCKHYFCEHCALKHHSKNKKCFVCN.

The chain is Zinc finger CCCH domain-containing protein 15 from Oryza sativa subsp. japonica (Rice).